Consider the following 206-residue polypeptide: uncharacterized protein (206 aa).

Residues 32-201 (VYIDAGHGGE…AADAIVNGID (170 aa)) enclose the MurNAc-LAA domain.

It belongs to the N-acetylmuramoyl-L-alanine amidase 3 family.

This is an uncharacterized protein from Bacillus subtilis (strain 168).